We begin with the raw amino-acid sequence, 439 residues long: Protein translocase subunit SecY (439 aa).

10 consecutive transmembrane segments (helical) span residues 23–43, 77–97, 125–145, 154–174, 187–207, 217–237, 274–294, 317–337, 369–389, and 397–417; these read IASV…PIPG, IFAL…LLTL, LVLA…ISGM, FYFY…LMWL, ISII…VHTI, ILLF…VVFI, VIPA…ISWF, YLIL…GLVF, IMIR…LIPE, and VPFY…MDFI.

This sequence belongs to the SecY/SEC61-alpha family. Component of the Sec protein translocase complex. Heterotrimer consisting of SecY, SecE and SecG subunits. The heterotrimers can form oligomers, although 1 heterotrimer is thought to be able to translocate proteins. Interacts with the ribosome. Interacts with SecDF, and other proteins may be involved. Interacts with SecA.

It is found in the cell membrane. In terms of biological role, the central subunit of the protein translocation channel SecYEG. Consists of two halves formed by TMs 1-5 and 6-10. These two domains form a lateral gate at the front which open onto the bilayer between TMs 2 and 7, and are clamped together by SecE at the back. The channel is closed by both a pore ring composed of hydrophobic SecY resides and a short helix (helix 2A) on the extracellular side of the membrane which forms a plug. The plug probably moves laterally to allow the channel to open. The ring and the pore may move independently. The chain is Protein translocase subunit SecY from Buchnera aphidicola subsp. Schizaphis graminum (strain Sg).